Consider the following 53-residue polypeptide: Sec-independent protein translocase protein TatA (53 aa).

The chain crosses the membrane as a helical span at residues 1 to 21; that stretch reads MGMSLSHLLIVLLIIFVLFGA.

The protein belongs to the TatA/E family. As to quaternary structure, the Tat system comprises two distinct complexes: a TatABC complex, containing multiple copies of TatA, TatB and TatC subunits, and a separate TatA complex, containing only TatA subunits. Substrates initially bind to the TatABC complex, which probably triggers association of the separate TatA complex to form the active translocon.

It localises to the cell inner membrane. Functionally, part of the twin-arginine translocation (Tat) system that transports large folded proteins containing a characteristic twin-arginine motif in their signal peptide across membranes. TatA could form the protein-conducting channel of the Tat system. The polypeptide is Sec-independent protein translocase protein TatA (Rickettsia conorii (strain ATCC VR-613 / Malish 7)).